Consider the following 839-residue polypeptide: Protein translocase subunit SecA (839 aa).

Residues Gln-86, 104-108, and Asp-493 each bind ATP; that span reads GEGKT. The disordered stretch occupies residues 794–839; sequence GIDMDNLQTSGPSDRPDPETSGDADPKNRAQRRAQEQERKRQNKKQ. The span at 807-833 shows a compositional bias: basic and acidic residues; it reads DRPDPETSGDADPKNRAQRRAQEQERK.

It belongs to the SecA family. Monomer and homodimer. Part of the essential Sec protein translocation apparatus which comprises SecA, SecYEG and auxiliary proteins SecDF. Other proteins may also be involved.

It localises to the cell membrane. The protein resides in the cytoplasm. It carries out the reaction ATP + H2O + cellular proteinSide 1 = ADP + phosphate + cellular proteinSide 2.. In terms of biological role, part of the Sec protein translocase complex. Interacts with the SecYEG preprotein conducting channel. Has a central role in coupling the hydrolysis of ATP to the transfer of proteins into and across the cell membrane, serving as an ATP-driven molecular motor driving the stepwise translocation of polypeptide chains across the membrane. This Brevibacillus brevis (strain 47 / JCM 6285 / NBRC 100599) protein is Protein translocase subunit SecA.